Consider the following 105-residue polypeptide: Large ribosomal subunit protein uL24 (105 aa).

Belongs to the universal ribosomal protein uL24 family. In terms of assembly, part of the 50S ribosomal subunit.

In terms of biological role, one of two assembly initiator proteins, it binds directly to the 5'-end of the 23S rRNA, where it nucleates assembly of the 50S subunit. One of the proteins that surrounds the polypeptide exit tunnel on the outside of the subunit. This chain is Large ribosomal subunit protein uL24, found in Staphylococcus carnosus (strain TM300).